The following is a 297-amino-acid chain: MASSTGHLIGGFAGGLSSAVALQPLDLLKTRFQQTKGGTLWQTVKSLDTPWQLWRGTLPSAIRTSVGSALYLSSLNLMRTALAKRKQFDTADSVVTGKSSNLPQLSMYENLVTGAFARGTVGYITMPITIIKVRYESTLYNYKSIAEAAKSIAAQEGIRGFFRGFGPTCLRDAPYSGLYVLLYEKLKHTLPTILPKSLLQLDSEGRYTAYTSTAINSTSAILSASMATTVTAPFDTIKTRMQLEPTKFKTFWSTLTTIVTQEHPIKIFSGLSMRLTRKALSAGIAWGIYEELIKHFM.

Solcar repeat units lie at residues 5-81 (TGHL…MRTA), 105-189 (LSMY…LKHT), and 211-295 (TSTA…LIKH). 6 consecutive transmembrane segments (helical) span residues 8 to 33 (LIGG…TRFQ), 56 to 82 (GTLP…RTAL), 111 to 136 (LVTG…VRYE), 164 to 187 (GFGP…EKLK), 215 to 241 (INST…KTRM), and 270 to 288 (GLSM…AWGI).

It belongs to the mitochondrial carrier (TC 2.A.29) family. SLC25A38 subfamily.

Its subcellular location is the mitochondrion inner membrane. The catalysed reaction is glycine(in) = glycine(out). Functionally, mitochondrial glycine transporter that imports glycine into the mitochondrial matrix. Plays an important role in providing glycine for the first enzymatic step in heme biosynthesis, the condensation of glycine with succinyl-CoA to produce 5-aminolevulinate (ALA) in the mitochondrial matrix. In Candida glabrata (strain ATCC 2001 / BCRC 20586 / JCM 3761 / NBRC 0622 / NRRL Y-65 / CBS 138) (Yeast), this protein is Mitochondrial glycine transporter.